A 185-amino-acid polypeptide reads, in one-letter code: uncharacterized protein (185 aa).

Helical transmembrane passes span 1-19 (MLNI…TSSA) and 105-125 (AGFI…TMDV).

It is found in the membrane. This is an uncharacterized protein from Caenorhabditis elegans.